A 437-amino-acid chain; its full sequence is Septin-7 (437 aa).

Residue serine 2 is modified to N-acetylserine. Position 30 is a phosphotyrosine (tyrosine 30). Residues 47–316 (RGFEFTLMVV…ENYRSRKLAA (270 aa)) form the Septin-type G domain. Positions 47-317 (RGFEFTLMVV…NYRSRKLAAV (271 aa)) are interaction with SEPTIN12. The segment at 57-64 (GESGLGKS) is G1 motif. 57–64 (GESGLGKS) serves as a coordination point for GTP. At serine 77 the chain carries Phosphoserine. Residues threonine 90, glycine 116, and 195 to 203 (KADTLTPEE) contribute to the GTP site. The segment at 113–116 (DTPG) is G3 motif. The G4 motif stretch occupies residues 194 to 197 (AKAD). Threonine 228 carries the phosphothreonine modification. GTP contacts are provided by glycine 250 and arginine 265. Residues 332–433 (TKSPLAQMEE…SRTLEKNKKK (102 aa)) are a coiled coil. Phosphoserine is present on serine 334. Position 373 is an N6-acetyllysine (lysine 373). Positions 378–410 (ELQRRHEQMKKNLEAQHKELEEKRRQFEDEKAN) are enriched in basic and acidic residues. A disordered region spans residues 378–437 (ELQRRHEQMKKNLEAQHKELEEKRRQFEDEKANWEAQQRILEQQNSSRTLEKNKKKGKIF). At serine 424 the chain carries Phosphoserine. Threonine 426 carries the phosphothreonine modification.

It belongs to the TRAFAC class TrmE-Era-EngA-EngB-Septin-like GTPase superfamily. Septin GTPase family. As to quaternary structure, septins polymerize into heterooligomeric protein complexes that form filaments, and associate with cellular membranes, actin filaments and microtubules. GTPase activity is required for filament formation. Filaments are assembled from asymmetrical heterotrimers, composed of SEPTIN2, SEPTIN6 and SEPTIN7 that associate head-to-head to form a hexameric unit. Within the trimer, directly interacts with SEPTIN6, while interaction with SEPTIN2 seems indirect. In the absence of SEPTIN6, forms homodimers. Interacts directly with CENPE and links CENPE to septin filaments composed of SEPTIN2, SEPTIN6 and SEPTIN7. Interacts with SEPTIN5, SEPTIN8, SEPTIN9 and SEPTIN11. Component of a septin core octameric complex consisting of SEPTIN12, SEPTIN7, SEPTIN6 and SEPTIN2 or SEPTIN4 in the order 12-7-6-2-2-6-7-12 or 12-7-6-4-4-6-7-12 and located in the sperm annulus; the SEPTIN12:SEPTIN7 association is mediated by the respective GTP-binding domains.

It localises to the cytoplasm. The protein localises to the chromosome. Its subcellular location is the centromere. It is found in the kinetochore. The protein resides in the cytoskeleton. It localises to the spindle. The protein localises to the cleavage furrow. Its subcellular location is the midbody. It is found in the cilium axoneme. The protein resides in the cell projection. It localises to the cilium. The protein localises to the flagellum. Filament-forming cytoskeletal GTPase. Required for normal organization of the actin cytoskeleton. Required for normal progress through mitosis. Involved in cytokinesis. Required for normal association of CENPE with the kinetochore. Plays a role in ciliogenesis and collective cell movements. Forms a filamentous structure with SEPTIN12, SEPTIN6, SEPTIN2 and probably SEPTIN4 at the sperm annulus which is required for the structural integrity and motility of the sperm tail during postmeiotic differentiation. This is Septin-7 from Bos taurus (Bovine).